Reading from the N-terminus, the 233-residue chain is Probable cyclic nucleotide phosphodiesterase COSY_0614 (233 aa).

Positions 10, 12, 48, 78, 144, 183, and 185 each coordinate Fe cation. AMP is bound by residues H12, D48, and 78-79 (NH). H185 contacts AMP.

This sequence belongs to the cyclic nucleotide phosphodiesterase class-III family. Fe(2+) is required as a cofactor.

This chain is Probable cyclic nucleotide phosphodiesterase COSY_0614, found in Vesicomyosocius okutanii subsp. Calyptogena okutanii (strain HA).